We begin with the raw amino-acid sequence, 475 residues long: Ankyrin repeat, SAM and basic leucine zipper domain-containing protein 1 (475 aa).

Positions 1–25 (MAAGPLRGLAVAGGGESSDSEDDGW) are disordered. Serine 17, serine 18, and serine 20 each carry phosphoserine. ANK repeat units lie at residues 45–74 (ERQETFKKALTTGNISLVEELLDSGISVDT), 78–107 (YGWTSLMYAASVSNVELVRVLLDRGANASF), 110–144 (DKQTVLITACSARGSEEKILKCIELLLSRNADPNV), 148–177 (RLMTPIMYAARDGHPQVVALLVAHGAEVNT), 181–210 (NGYTALTWAARQGHKNVVLKLLELGANKMI), and 214–243 (DGKTPSEIAKRNKHLEIFNFLSLTLNPLEG). In terms of domain architecture, SAM spans 272–334 (SYTAFGDLEI…KIMAALKELE (63 aa)).

In terms of assembly, interacts with DDX4, PIWIL1, RANBP9 and TDRD1.

The protein localises to the cytoplasm. In terms of biological role, plays a central role during spermatogenesis by repressing transposable elements and preventing their mobilization, which is essential for the germline integrity. Acts via the piRNA metabolic process, which mediates the repression of transposable elements during meiosis by forming complexes composed of piRNAs and Piwi proteins and governs the methylation and subsequent repression of transposons. Its association with pi-bodies suggests a participation in the primary piRNAs metabolic process. Required prior to the pachytene stage to facilitate the production of multiple types of piRNAs, including those associated with repeats involved in the regulation of retrotransposons. May act by mediating protein-protein interactions during germ cell maturation. This Bos taurus (Bovine) protein is Ankyrin repeat, SAM and basic leucine zipper domain-containing protein 1 (ASZ1).